A 349-amino-acid polypeptide reads, in one-letter code: Probable ethanolamine kinase A (349 aa).

The protein belongs to the choline/ethanolamine kinase family.

The protein resides in the cytoplasm. It carries out the reaction ethanolamine + ATP = phosphoethanolamine + ADP + H(+). It participates in phospholipid metabolism; phosphatidylethanolamine biosynthesis; phosphatidylethanolamine from ethanolamine: step 1/3. Highly specific for ethanolamine phosphorylation. May be a rate-controlling step in phosphatidylethanolamine biosynthesis. This Dictyostelium discoideum (Social amoeba) protein is Probable ethanolamine kinase A (etnkA).